Consider the following 767-residue polypeptide: Photosystem I P700 chlorophyll a apoprotein A1 (767 aa).

8 helical membrane passes run 72–95 (IFSA…FHGA), 158–181 (LMAL…FHYH), 197–221 (LNHH…HVSL), 305–323 (IAHH…GHMY), 364–387 (WHAQ…QHMY), 403–429 (IGLF…IAMV), 451–473 (AIIS…LYIH), and 548–566 (FMVH…LILL). Residues Cys590 and Cys599 each contribute to the [4Fe-4S] cluster site. Helical transmembrane passes span 606–627 (HVFL…HFSW) and 681–703 (TSAY…MFLF). His692 provides a ligand contact to chlorophyll a'. Positions 700 and 708 each coordinate chlorophyll a. Trp709 is a phylloquinone binding site. Residues 741–761 (AVGVAHYLLGGIATTWAFFHA) traverse the membrane as a helical segment.

Belongs to the PsaA/PsaB family. The PsaA/B heterodimer binds the P700 chlorophyll special pair and subsequent electron acceptors. PSI consists of a core antenna complex that captures photons, and an electron transfer chain that converts photonic excitation into a charge separation. The cyanobacterial PSI reaction center is composed of one copy each of PsaA,B,C,D,E,F,I,J,K,L,M and X, and forms trimeric complexes. Requires PSI electron transfer chain: 5 chlorophyll a, 1 chlorophyll a', 2 phylloquinones and 3 4Fe-4S clusters. PSI core antenna: 90 chlorophyll a, 22 carotenoids, 3 phospholipids and 1 galactolipid. P700 is a chlorophyll a/chlorophyll a' dimer, A0 is one or more chlorophyll a, A1 is one or both phylloquinones and FX is a shared 4Fe-4S iron-sulfur center. as cofactor.

Its subcellular location is the cellular thylakoid membrane. It carries out the reaction reduced [plastocyanin] + hnu + oxidized [2Fe-2S]-[ferredoxin] = oxidized [plastocyanin] + reduced [2Fe-2S]-[ferredoxin]. PsaA and PsaB bind P700, the primary electron donor of photosystem I (PSI), as well as the electron acceptors A0, A1 and FX. PSI is a plastocyanin/cytochrome c6-ferredoxin oxidoreductase, converting photonic excitation into a charge separation, which transfers an electron from the donor P700 chlorophyll pair to the spectroscopically characterized acceptors A0, A1, FX, FA and FB in turn. Oxidized P700 is reduced on the lumenal side of the thylakoid membrane by plastocyanin or cytochrome c6. In Synechococcus sp. (strain CC9902), this protein is Photosystem I P700 chlorophyll a apoprotein A1.